Reading from the N-terminus, the 210-residue chain is Na(+)-translocating NADH-quinone reductase subunit D (210 aa).

Transmembrane regions (helical) follow at residues 42–62 (FVMTLAVMFVTALSNFFVSLI), 72–92 (IIVQMAIIASLVIVVDQILKA), 103–123 (VFVGLIITNCIVMGRAEAFAM), 131–151 (FIDGIGNGLGYGFVLMTVGFF), and 178–198 (NGLMLLAPSAFFLIGFMIWAI).

Belongs to the NqrDE/RnfAE family. In terms of assembly, composed of six subunits; NqrA, NqrB, NqrC, NqrD, NqrE and NqrF.

It localises to the cell inner membrane. It catalyses the reaction a ubiquinone + n Na(+)(in) + NADH + H(+) = a ubiquinol + n Na(+)(out) + NAD(+). Functionally, NQR complex catalyzes the reduction of ubiquinone-1 to ubiquinol by two successive reactions, coupled with the transport of Na(+) ions from the cytoplasm to the periplasm. NqrA to NqrE are probably involved in the second step, the conversion of ubisemiquinone to ubiquinol. This chain is Na(+)-translocating NADH-quinone reductase subunit D, found in Vibrio cholerae serotype O1 (strain M66-2).